Reading from the N-terminus, the 157-residue chain is Putative pre-16S rRNA nuclease (157 aa).

This sequence belongs to the YqgF nuclease family.

It is found in the cytoplasm. Its function is as follows. Could be a nuclease involved in processing of the 5'-end of pre-16S rRNA. The polypeptide is Putative pre-16S rRNA nuclease (Ruegeria sp. (strain TM1040) (Silicibacter sp.)).